Reading from the N-terminus, the 267-residue chain is Small ribosomal subunit protein uS2 (267 aa).

Residues 233 to 250 are compositionally biased toward basic and acidic residues; that stretch reads RAESDKAETDKVEVEGKG. The segment at 233–267 is disordered; the sequence is RAESDKAETDKVEVEGKGEAPAAEAAEVVESADKA. Residues 251–261 show a composition bias toward low complexity; sequence EAPAAEAAEVV.

The protein belongs to the universal ribosomal protein uS2 family.

This chain is Small ribosomal subunit protein uS2, found in Syntrophotalea carbinolica (strain DSM 2380 / NBRC 103641 / GraBd1) (Pelobacter carbinolicus).